The following is a 92-amino-acid chain: Small ribosomal subunit protein bS20 (92 aa).

Positions 1–11 (MANIKSQKKRI) are enriched in basic residues. The interval 1 to 22 (MANIKSQKKRIRQNEKARLRNK) is disordered.

This sequence belongs to the bacterial ribosomal protein bS20 family.

Its function is as follows. Binds directly to 16S ribosomal RNA. In Thermobifida fusca (strain YX), this protein is Small ribosomal subunit protein bS20.